We begin with the raw amino-acid sequence, 426 residues long: Potassium channel subfamily K member 2 (426 aa).

At 1 to 61 the chain is on the cytoplasmic side; it reads MLPSASRERP…TTINVMKWKT (61 aa). 2 important for GNG4 binding and L-glutamate release in astrocytes regions span residues 17–38 and 51–61; these read AAPDLLDPKSAAQNSKPRLSFS and DTTINVMKWKT. Residues 62-82 traverse the membrane as a helical segment; sequence VSTIFLVVVLYLIIGATVFKA. Asn-110 and Asn-134 each carry an N-linked (GlcNAc...) asparagine glycan. The segment at residues 144–170 is an intramembrane region (pore-forming); it reads LGSSFFFAGTVITTIGFGNISPRTEGG. 4 residues coordinate K(+): Thr-157, Ile-158, Gly-159, and Phe-160. The tract at residues 157–162 is selectivity filter 1; the sequence is TIGFGN. The chain crosses the membrane as a helical span at residues 172–192; sequence IFCIIYALLGIPLFGFLLAGV. Over 193 to 223 the chain is Cytoplasmic; it reads GDQLGTIFGKGIAKVEDTFIKWNVSQTKIRI. The chain crosses the membrane as a helical span at residues 224–244; the sequence is ISTIIFILFGCVLFVALPAII. An intramembrane region (pore-forming) is located at residues 253–283; that stretch reads ALDAIYFVVITLTTIGFGDYVAGGSDIEYLD. Residues Thr-266, Ile-267, Gly-268, and Phe-269 each coordinate K(+). Residues 266–271 form a selectivity filter 2 region; sequence TIGFGD. A helical transmembrane segment spans residues 288–308; it reads VVWFWILVGLAYFAAVLSMIG. The Cytoplasmic segment spans residues 309 to 426; that stretch reads DWLRVISKKT…EEIAVIENIK (118 aa). The tract at residues 313–326 is interaction with AKAP5; sequence VISKKTKEEVGEFR. The tract at residues 337–385 is essential for chloroform and halothane sensitivity; sequence TAEFKETRRRLSVEIYDKFQRATSIKRKLSAELAGNHNQELTPCRRTLS. Ser-348 bears the Phosphoserine; by PKA mark.

This sequence belongs to the two pore domain potassium channel (TC 1.A.1.8) family. As to quaternary structure, homodimer; disulfide-linked. Forms heterodimers with other 2-pore domain K(+) channel subunits, such as KCNK1, KCNK4, KCNK10 and KCNK18. Interacts with AKAP5; the channel is recruited to postsynaptic microdomains by AKAP5 where it can integrate neurotransmitter receptor signals. Part of a complex composed of AKAP5 and ADRB2. Upon AKAP5 binding, the channel is no longer sensitive to intracellular acidification, membrane stretch or arachidonic acid stimuli. Interacts with POPDC1; the interaction enhances KCNK2 surface expression and is inhibited by cAMP. Interacts (via N-terminus) with G-protein subunit GNG4 (via C-terminus); this interaction confers ion selectivity to L-glutamate and Cl(-) anions. Phosphorylation at Ser-348 controls the reversible conversion from a leak channel to a voltage-dependent channel. As to expression, detected in kidney, adrenal gland and brain where it is preferentially expressed in the amygdala but not found in thalamus, hypothalamus, hippocampus or substantia nigra.

The protein resides in the cell membrane. Its subcellular location is the endoplasmic reticulum membrane. The protein localises to the cell projection. It localises to the axon. It is found in the dendrite. The protein resides in the postsynaptic density membrane. Its subcellular location is the sarcolemma. The enzyme catalyses K(+)(in) = K(+)(out). It catalyses the reaction L-glutamate(out) = L-glutamate(in). It carries out the reaction chloride(in) = chloride(out). The catalysed reaction is Rb(+)(in) = Rb(+)(out). The enzyme catalyses Cs(+)(in) = Cs(+)(out). With respect to regulation, activated by various stimuli including intracellular acidic pH, mechanical stretch and polyunsaturated fatty acids such as arachidonic acid. Activated by volatile anesthetics such as chloroform, halothane, and isoflurane. In terms of biological role, k(+) channel that conducts voltage-dependent outward rectifying currents upon membrane depolarization. Voltage sensing is coupled to K(+) electrochemical gradient in an 'ion flux gating' mode where outward but not inward ion flow opens the gate. Converts to voltage-independent 'leak' conductance mode upon stimulation by various stimuli including mechanical membrane stretch, acidic pH, heat and lipids. Reversibly converts between a voltage-insensitive K(+) 'leak' channel and a voltage-dependent outward rectifying K(+) channel in a phosphorylation-dependent manner. Homo- and heterodimerizes to form functional channels with distinct regulatory and gating properties. In trigeminal ganglia sensory neurons, the heterodimer of KCNK2/TREK-1 and KCNK18/TRESK inhibits neuronal firing and neurogenic inflammation by stabilizing the resting membrane potential at K(+) equilibrium potential as well as by regulating the threshold of action potentials and the spike frequency. At trigeminal A-beta afferent nerves, the heterodimer of KCNK2/TREK-1 and KCNK4/TRAAK is mostly coexpressed at nodes of Ranvier where it conducts voltage-independent mechanosensitive and thermosensitive currents, allowing rapid action potential repolarization, high speed and high frequence saltatory conduction on myelinated nerves to ensure prompt sensory responses. In hippocampal astrocytes, the heterodimer of KCNK2/TREK-1 and KCNK1/TWIK-1 allows passive K(+) conductance under basal conditions, but changes ion selectivity and becomes permeable to L-glutamate and Cl(-) ions upon binding to G-protein subunit GNG4 in stimulated astrocytes. Mediates rapid L-glutamate release in response to activation of G-protein-coupled receptors, such as F2R and CNR1. In hippocampal pyramidal neurons, the homodimer of KCNK2/TREK-1 contributes to gamma-aminobutyric acid (GABA) B-induced slow inhibitory postsynaptic potential. Associates with AKAP5 and Gs-protein-coupled receptor B2AR at postsynaptic dense bodies and converts to a leak channel no longer sensitive to stimulation by arachidonic acid, acidic pH or mechanical stress, nor inhibited by Gq-coupled receptors but still under the negative control of Gs-coupled receptors. Permeable to other monovalent cations such as Rb(+) and Cs(+). Does not display channel activity but reduces the channel activity of isoform 1 and isoform 2 and reduces cell surface expression of isoform 2. The polypeptide is Potassium channel subfamily K member 2 (Homo sapiens (Human)).